The chain runs to 451 residues: Subtilase-type proteinase psp3 (451 aa).

A signal peptide spans 1 to 20; the sequence is MRVSWISGLLLVAHLAPSSA. Positions 80–161 constitute an Inhibitor I9 domain; sequence YIVMFKPSVD…LVEPDRVMHV (82 aa). The Peptidase S8 domain occupies 169 to 451; sequence PWGLARVSHR…PNVLAFNNYE (283 aa). Residues D205, H237, and S394 each act as charge relay system in the active site.

Belongs to the peptidase S8 family.

The chain is Subtilase-type proteinase psp3 (psp3) from Schizosaccharomyces pombe (strain 972 / ATCC 24843) (Fission yeast).